The sequence spans 311 residues: Solute carrier family 25 member 48 (311 aa).

3 Solcar repeats span residues 3-86 (NFQL…TQRF), 100-205 (PHVL…LSDW), and 214-301 (PSPC…SLQA). 6 consecutive transmembrane segments (helical) span residues 9 to 29 (FVAG…LDTV), 61 to 81 (GMSF…GVFS), 107 to 127 (LLAS…VDLI), 193 to 213 (CLYF…ACAG), 217 to 237 (CAVW…ATPM), and 277 to 295 (ITVN…FLGY).

It belongs to the mitochondrial carrier (TC 2.A.29) family.

The protein localises to the mitochondrion inner membrane. The chain is Solute carrier family 25 member 48 (SLC25A48) from Bos taurus (Bovine).